Reading from the N-terminus, the 399-residue chain is Argininosuccinate synthase (399 aa).

Residue 8 to 16 (AYSGGLDTS) participates in ATP binding. An L-citrulline-binding site is contributed by tyrosine 87. Glycine 117 provides a ligand contact to ATP. Residues threonine 119, asparagine 123, and aspartate 124 each contribute to the L-aspartate site. Asparagine 123 lines the L-citrulline pocket. Positions 127, 175, 260, and 272 each coordinate L-citrulline.

It belongs to the argininosuccinate synthase family. Type 1 subfamily. Homotetramer.

It localises to the cytoplasm. The catalysed reaction is L-citrulline + L-aspartate + ATP = 2-(N(omega)-L-arginino)succinate + AMP + diphosphate + H(+). The protein operates within amino-acid biosynthesis; L-arginine biosynthesis; L-arginine from L-ornithine and carbamoyl phosphate: step 2/3. This chain is Argininosuccinate synthase, found in Rhodococcus jostii (strain RHA1).